A 344-amino-acid polypeptide reads, in one-letter code: HTH-type transcriptional regulator MalR (344 aa).

One can recognise an HTH lacI-type domain in the interval 1–54; the sequence is MTTRLADIAAQAGVSEATVSRVLNGKPGVAATTRQSVLAALDVLGYERPVRLRQ. Positions 5–24 form a DNA-binding region, H-T-H motif; it reads LADIAAQAGVSEATVSRVLN.

In terms of biological role, transcriptional repressor of the maltosaccharide utilization operon malEFG. The chain is HTH-type transcriptional regulator MalR (malR) from Streptomyces coelicolor (strain ATCC BAA-471 / A3(2) / M145).